Consider the following 206-residue polypeptide: uncharacterized protein (206 aa).

Transmembrane regions (helical) follow at residues 9–29 (ILSL…SVLT), 47–67 (LGVV…LAFL), 74–94 (FFVI…INTI), and 150–170 (IAVI…FYAF).

This sequence belongs to the Rht family.

Its subcellular location is the cell membrane. This is an uncharacterized protein from Synechocystis sp. (strain ATCC 27184 / PCC 6803 / Kazusa).